The sequence spans 58 residues: Large ribosomal subunit protein uL30 (58 aa).

It belongs to the universal ribosomal protein uL30 family. In terms of assembly, part of the 50S ribosomal subunit.

The chain is Large ribosomal subunit protein uL30 from Vibrio campbellii (strain ATCC BAA-1116).